The chain runs to 278 residues: Translation initiation factor IF-3, mitochondrial (278 aa).

A mitochondrion-targeting transit peptide spans 1-31 (MAALFLKRLTLQTVKSENSCIRCFGKHILQK). The segment at 249–278 (KAYKETQETQERDTLNKDHGNDKESNVLHQ) is disordered.

This sequence belongs to the IF-3 family.

The protein resides in the mitochondrion. Functionally, IF-3 binds to the 28S ribosomal subunit and shifts the equilibrium between 55S ribosomes and their 39S and 28S subunits in favor of the free subunits, thus enhancing the availability of 28S subunits on which protein synthesis initiation begins. This is Translation initiation factor IF-3, mitochondrial (MTIF3) from Homo sapiens (Human).